The chain runs to 1198 residues: Rac guanine nucleotide exchange factor B (1198 aa).

The segment at 1 to 104 (MFSNFFGSSK…QHQGVITSLQ (104 aa)) is disordered. A compositionally biased stretch (low complexity) spans 8-20 (SSKRNTIASSSSS). Positions 21–34 (SKKDKDNGKDESSK) are enriched in basic and acidic residues. The span at 35-58 (LKNSGSSTLPKPITNNESGNNFIT) shows a compositional bias: polar residues. Residues 59 to 97 (SPSVSSPLISPLSSSPSPLLSSSSNSIQSTSHQQQQQHQ) show a composition bias toward low complexity. Residues 126-232 (SSLEQTARKW…NIVVLGKHAS (107 aa)) enclose the Calponin-homology (CH) 1 domain. The tract at residues 260 to 284 (FGGNHNNNNNNNNNNNTSNGDLSPV) is disordered. Residues 263 to 275 (NHNNNNNNNNNNN) are compositionally biased toward low complexity. Calponin-homology (CH) domains are found at residues 341 to 449 (PELQ…NKMY) and 511 to 619 (PEDM…ENFD). Residues 632–846 (RRQKVIEEII…KRVADHVNES (215 aa)) enclose the DH domain. The 151-residue stretch at 876–1026 (TYIREGFLEI…WMEDLRSCLQ (151 aa)) folds into the PH domain. Positions 940–952 (GEACVDGDDDGGE) are enriched in acidic residues. Disordered regions lie at residues 940–989 (GEAC…SNKS) and 1076–1198 (NNNN…IDNQ). Low complexity-rich tracts occupy residues 977–989 (NSNNNNNSNSNKS) and 1076–1118 (NNNN…NNND). Residues 1155–1167 (DETISDTESDDYE) are compositionally biased toward acidic residues. Polar residues predominate over residues 1188–1198 (FSDTIKNIDNQ).

As to quaternary structure, binds to F-actin.

Its subcellular location is the late endosome. Its function is as follows. Involved in the regulation of the late steps of the endocytic pathway. The protein is Rac guanine nucleotide exchange factor B (gxcB) of Dictyostelium discoideum (Social amoeba).